The sequence spans 548 residues: Protein NRT1/ PTR FAMILY 2.4 (548 aa).

The next 12 helical transmembrane spans lie at 29–49 (TLLG…VFLI), 65–85 (IVNG…DSFF), 88–108 (IPVI…LTLI), 136–156 (ILYA…FILA), 172–192 (FFNW…TAIV), 200–220 (WKLG…IFVA), 316–336 (LVPL…QMSM), 354–374 (VSAG…IILN), 393–413 (LQKV…SAVV), 429–449 (VLWL…HFPA), 468–488 (SLTS…IDVI), and 508–528 (YLVL…CSWF).

The protein belongs to the major facilitator superfamily. Proton-dependent oligopeptide transporter (POT/PTR) (TC 2.A.17) family. Strongly expressed in the root stele.

The protein localises to the membrane. Transporter involved in a passive nitrate efflux. In Arabidopsis thaliana (Mouse-ear cress), this protein is Protein NRT1/ PTR FAMILY 2.4 (NPF2.4).